The primary structure comprises 713 residues: Cyclomaltodextrin glucanotransferase (713 aa).

The signal sequence occupies residues 1–27 (MKRFMKLTAVWTLWLSLTLGLLSPVHA). Residues 28 to 165 (APDTSVSNKQ…NIKVIIDFAP (138 aa)) form an A1 region. The Ca(2+) site is built by aspartate 54, asparagine 56, asparagine 59, and asparagine 60. A disulfide bridge connects residues cysteine 70 and cysteine 77. Residues glycine 78 and aspartate 80 each coordinate Ca(2+). 127–128 (YW) is a substrate binding site. A Ca(2+)-binding site is contributed by asparagine 166. Residues 166–229 (NHTSPASSDD…NLYDLADLNH (64 aa)) are b. Histidine 167 serves as a coordination point for substrate. Residue isoleucine 217 coordinates Ca(2+). 220 to 223 (NLYD) is a binding site for substrate. Aspartate 226 provides a ligand contact to Ca(2+). The interval 230 to 433 (NNSSVDVYLK…LRKSNPAIAY (204 aa)) is A2. Residue arginine 254 coordinates substrate. Aspartate 256 functions as the Nucleophile in the catalytic mechanism. 259-260 (KH) contributes to the substrate binding site. Position 260 (histidine 260) interacts with Ca(2+). Catalysis depends on glutamate 284, which acts as the Proton donor. The substrate site is built by histidine 354, aspartate 398, and arginine 402. The tract at residues 434–522 (GSTHERWINN…GTAVWQYTTD (89 aa)) is c. Positions 523–609 (ATTPIIGNVG…SNIYDNFEVL (87 aa)) are d. Positions 526 to 607 (PIIGNVGPMM…AASNIYDNFE (82 aa)) constitute an IPT/TIG domain. In terms of domain architecture, CBM20 spans 608–713 (VLTGDQVTVR…TATVNVNWQP (106 aa)). The interval 610–713 (TGDQVTVRFV…TATVNVNWQP (104 aa)) is e.

Belongs to the glycosyl hydrolase 13 family. As to quaternary structure, monomer. Requires Ca(2+) as cofactor.

Its subcellular location is the secreted. It catalyses the reaction Cyclizes part of a (1-&gt;4)-alpha-D-glucan chain by formation of a (1-&gt;4)-alpha-D-glucosidic bond.. This Bacillus sp. (strain 1011) protein is Cyclomaltodextrin glucanotransferase (cgt).